Reading from the N-terminus, the 777-residue chain is Glucocorticoid receptor (777 aa).

Residues 1-14 (MDSKESLTPGKEEN) show a composition bias toward basic and acidic residues. The segment at 1–22 (MDSKESLTPGKEENPSSVLTQE) is disordered. Positions 1–420 (MDSKESLTPG…TATTGPPPKL (420 aa)) are modulating. A Phosphothreonine modification is found at Thr8. Omega-N-methylarginine is present on Arg23. Phosphoserine occurs at positions 45, 113, 134, and 141. The segment at 130 to 182 (NRSTSVPENPKSSASSSVSAAPKEKEFPKTHSDVSSEQQNLKGQTGSNGGNVK) is disordered. Low complexity predominate over residues 134 to 150 (SVPENPKSSASSSVSAA). Over residues 151–163 (PKEKEFPKTHSDV) the composition is skewed to basic and acidic residues. Positions 164 to 174 (SSEQQNLKGQT) are enriched in polar residues. 3 positions are modified to phosphoserine: Ser203, Ser211, and Ser226. Lys258 is covalently cross-linked (Glycyl lysine isopeptide (Lys-Gly) (interchain with G-Cter in SUMO2)). Ser267 carries the post-translational modification Phosphoserine. Glycyl lysine isopeptide (Lys-Gly) (interchain with G-Cter in SUMO); alternate cross-links involve residues Lys277 and Lys293. Residues Lys277 and Lys293 each participate in a glycyl lysine isopeptide (Lys-Gly) (interchain with G-Cter in SUMO2); alternate cross-link. Low complexity predominate over residues 394-414 (SSPSMRPDVSSPPSSSSTATT). The disordered stretch occupies residues 394–415 (SSPSMRPDVSSPPSSSSTATTG). A Phosphoserine modification is found at Ser404. A Glycyl lysine isopeptide (Lys-Gly) (interchain with G-Cter in ubiquitin) cross-link involves residue Lys419. NR C4-type zinc fingers lie at residues 421 to 441 (CLVC…CGSC) and 457 to 481 (CAGR…YRKC). Residues 421–486 (CLVCSDEASG…RYRKCLQAGM (66 aa)) constitute a DNA-binding region (nuclear receptor). Lys480, Lys492, Lys494, and Lys495 each carry N6-acetyllysine. The interaction with CLOCK stretch occupies residues 485–777 (GMNLEARKTK…NIKKLLFHQK (293 aa)). Residues 487–523 (NLEARKTKKKIKGIQQATTGVSQETSENPANKTIVPA) form a hinge region. Residues 524-758 (TLPQLTPTLV…FPEMLAEIIT (235 aa)) form the NR LBD domain. Residues 532–697 (LVSLLEVIEP…EIRMTYIKEL (166 aa)) form an interaction with CRY1 region. Residue Lys703 forms a Glycyl lysine isopeptide (Lys-Gly) (interchain with G-Cter in SUMO) linkage.

Belongs to the nuclear hormone receptor family. NR3 subfamily. In terms of assembly, heteromultimeric cytoplasmic complex with HSP90AA1, HSPA1A/HSPA1B, and FKBP5 or another immunophilin such as PPID, STIP1, or the immunophilin homolog PPP5C. Upon ligand binding FKBP5 dissociates from the complex and FKBP4 takes its place, thereby linking the complex to dynein and mediating transport to the nucleus, where the complex dissociates. Probably forms a complex composed of chaperones HSP90 and HSP70, co-chaperones CDC37, PPP5C, TSC1 and client protein TSC2, CDK4, AKT, RAF1 and NR3C1; this complex does not contain co-chaperones STIP1/HOP and PTGES3/p23. Directly interacts with UNC45A. Binds to DNA as a homodimer, and as heterodimer with NR3C2 or the retinoid X receptor. Binds STAT5A and STAT5B homodimers and heterodimers. Interacts with NRIP1, POU2F1, POU2F2 and TRIM28. Interacts with several coactivator complexes, including the SMARCA4 complex, CREBBP/EP300, TADA2L (Ada complex) and p160 coactivators such as NCOA2 and NCOA6. Interaction with BAG1 inhibits transactivation. Interacts with HEXIM1 and TGFB1I1. Interacts with NCOA1. Interacts with NCOA3, SMARCA4, SMARCC1, SMARCD1, and SMARCE1. Interacts with CLOCK, CRY1 and CRY2 in a ligand-dependent fashion. Interacts with CIART. Interacts with RWDD3. Interacts with UBE2I/UBC9 and this interaction is enhanced in the presence of RWDD3. Interacts with GRIP1. Interacts with NR4A3 (via nuclear receptor DNA-binding domain), represses transcription activity of NR4A3 on the POMC promoter Nur response element (NurRE). Directly interacts with PNRC2 to attract and form a complex with UPF1 and DCP1A; the interaction leads to rapid mRNA degradation. Interacts with GSK3B. Interacts with FNIP1 and FNIP2. Interacts (via C-terminus) with HNRNPU (via C-terminus). Interacts with MCM3AP. Interacts (via domain NR LBD) with HSP90AA1 and HSP90AB1. In the absence of hormonal ligand, interacts with TACC1. Interacts (via NR LBD domain) with ZNF764 (via KRAB domain); the interaction regulates transcription factor activity of NR3C1 by directing its actions toward certain biologic pathways. Post-translationally, acetylation by CLOCK reduces its binding to glucocorticoid response elements and its transcriptional activity. Increased proteasome-mediated degradation in response to glucocorticoids. In terms of processing, phosphorylated in the absence of hormone; becomes hyperphosphorylated in the presence of glucocorticoid. The Ser-203, Ser-226 and Ser-404-phosphorylated forms are mainly cytoplasmic, and the Ser-211-phosphorylated form is nuclear. Phosphorylation at Ser-211 increases transcriptional activity. Phosphorylation at Ser-203, Ser-226 and Ser-404 decreases signaling capacity. Phosphorylation at Ser-404 may protect from glucocorticoid-induced apoptosis. Phosphorylation at Ser-203 and Ser-211 is not required in regulation of chromosome segregation. May be dephosphorylated by PPP5C, attenuates NR3C1 action. Post-translationally, ubiquitinated by UBR5, leading to its degradation: UBR5 specifically recognizes and binds ligand-bound NR3C1 when it is not associated with coactivators (NCOAs). In presence of NCOAs, the UBR5-degron is not accessible, preventing its ubiquitination and degradation. Sumoylation at Lys-277 and Lys-293 negatively regulates its transcriptional activity. Sumoylation at Lys-703 positively regulates its transcriptional activity in the presence of RWDD3. Sumoylation at Lys-277 and Lys-293 is dispensable whereas sumoylation at Lys-703 is critical for the stimulatory effect of RWDD3 on its transcriptional activity. Heat shock increases sumoylation in a RWDD3-dependent manner.

The protein localises to the cytoplasm. Its subcellular location is the nucleus. It is found in the mitochondrion. The protein resides in the cytoskeleton. It localises to the spindle. The protein localises to the microtubule organizing center. Its subcellular location is the centrosome. It is found in the chromosome. The protein resides in the nucleoplasm. In terms of biological role, receptor for glucocorticoids (GC). Has a dual mode of action: as a transcription factor that binds to glucocorticoid response elements (GRE), both for nuclear and mitochondrial DNA, and as a modulator of other transcription factors. Affects inflammatory responses, cellular proliferation and differentiation in target tissues. Involved in chromatin remodeling. Plays a role in rapid mRNA degradation by binding to the 5' UTR of target mRNAs and interacting with PNRC2 in a ligand-dependent manner which recruits the RNA helicase UPF1 and the mRNA-decapping enzyme DCP1A, leading to RNA decay. Could act as a coactivator for STAT5-dependent transcription upon growth hormone (GH) stimulation and could reveal an essential role of hepatic GR in the control of body growth. Mediates glucocorticoid-induced apoptosis. Promotes accurate chromosome segregation during mitosis. May act as a tumor suppressor. May play a negative role in adipogenesis through the regulation of lipolytic and antilipogenic gene expression. The chain is Glucocorticoid receptor (NR3C1) from Saimiri boliviensis boliviensis (Bolivian squirrel monkey).